The chain runs to 101 residues: Small ribosomal subunit protein uS10 (101 aa).

This sequence belongs to the universal ribosomal protein uS10 family. Part of the 30S ribosomal subunit.

Its function is as follows. Involved in the binding of tRNA to the ribosomes. The chain is Small ribosomal subunit protein uS10 from Rhodococcus erythropolis (strain PR4 / NBRC 100887).